Reading from the N-terminus, the 545-residue chain is Heparanase (545 aa).

Positions 1–37 (MLACRKPGLRPPLLLLLPLLGPLGPCSPGTPAAAAPA) are cleaved as a signal peptide. Position 64–66 (64–66 (DAN)) interacts with heparan sulfate group. The propeptide at 112–159 (PAFEERSYWLSQSNQDICKSGSIPSDVEEKLRLEWPFQEQVLLREQYQ) is linker peptide. A disulfide bridge connects residues C129 and C181. Residue 160–164 (KKFTN) participates in heparan sulfate group binding. N-linked (GlcNAc...) asparagine glycans are attached at residues N164 and N219. E227 acts as the Proton donor in catalysis. Heparan sulfate group contacts are provided by residues 272-282 (QPRRNTVKMLK), H298, and R305. The segment at 290 to 419 (EVIDSVTWHH…LLFKKLVGNK (130 aa)) is required for heterodimerization with the heparanase 8 kDa subunit. Catalysis depends on E345, which acts as the Nucleophile. Residues 350–352 (FGG) and 391–393 (GNY) each bind heparan sulfate group. C439 and C544 are disulfide-bonded. A glycan (N-linked (GlcNAc...) asparagine) is linked at N461. A required for transferring proheparanase to the Golgi apparatus, secretion and subsequent enzyme activity and for enhancement of PKB/AKT1 phosphorylation region spans residues 529-545 (FSYGFFVIRNAKVAACI).

Belongs to the glycosyl hydrolase 79 family. As to quaternary structure, heterodimer; heterodimer formation between the 8 kDa and the 50 kDa subunits is required for enzyme activity. Interacts with TF; the interaction, inhibited by heparin, enhances the generation of activated factor X and activates coagulation. Interacts with HRG; the interaction is enhanced at acidic pH, partially inhibits binding of HPSE to cell surface receptors and modulates its enzymatic activity. Interacts with SDC1; the interaction enhances the shedding of SDC1. Interacts with HPSE2. Post-translationally, proteolytically processed. The cleavage of the 65 kDa form leads to the generation of a linker peptide, and the 8 kDa and the 50 kDa products. The active form, the 8/50 kDa heterodimer, is resistant to degradation. Complete removal of the linker peptide appears to be a prerequisite to the complete activation of the enzyme. N-glycosylated. Glycosylation of the 50 kDa subunit appears to be essential for its solubility. As to expression, highly expressed in placenta and weakly in the kidney, lung, spleen and uterus.

The protein localises to the lysosome membrane. It localises to the secreted. Its subcellular location is the nucleus. The catalysed reaction is endohydrolysis of (1-&gt;4)-beta-D-glycosidic bonds of heparan sulfate chains in heparan sulfate proteoglycan.. Inhibited by laminarin sulfate and, to a lower extent, by heparin, sulfamin and EDTA. Activated by calcium and magnesium. Functionally, endoglycosidase that cleaves heparan sulfate proteoglycans (HSPGs) into heparan sulfate side chains and core proteoglycans. Participates in extracellular matrix (ECM) degradation and remodeling. Selectively cleaves the linkage between a glucuronic acid unit and an N-sulfo glucosamine unit carrying either a 3-O-sulfo or a 6-O-sulfo group. Can also cleave the linkage between a glucuronic acid unit and an N-sulfo glucosamine unit carrying a 2-O-sulfo group, but not linkages between a glucuronic acid unit and a 2-O-sulfated iduronic acid moiety. Essentially inactive at neutral pH but becomes active under acidic conditions such as during tumor invasion and in inflammatory processes. Facilitates cell migration associated with metastasis, wound healing and inflammation. Enhances shedding of syndecans. Acts as a procoagulant by enhancing the generation of activated factor X/F10 in the presence of tissue factor/TF and activated factor VII/F7. Independent of its enzymatic activity, increases cell adhesion to the extracellular matrix (ECM). Enhances AKT1/PKB phosphorylation, possibly via interaction with a lipid raft-resident receptor. Plays a role in the regulation of osteogenesis. Enhances angiogenesis through up-regulation of SRC-mediated activation of VEGF. Implicated in hair follicle inner root sheath differentiation and hair homeostasis. The chain is Heparanase (HPSE) from Bos taurus (Bovine).